The following is a 386-amino-acid chain: uncharacterized protein (386 aa).

Transmembrane regions (helical) follow at residues 54–74 (AVLQ…AIVA) and 347–367 (LLGG…PIAG).

The protein to M.tuberculosis Rv0628c.

Its subcellular location is the cell membrane. This is an uncharacterized protein from Mycobacterium tuberculosis (strain CDC 1551 / Oshkosh).